A 362-amino-acid polypeptide reads, in one-letter code: Heat-inducible transcription repressor HrcA (362 aa).

The protein belongs to the HrcA family.

Functionally, negative regulator of class I heat shock genes (grpE-dnaK-dnaJ and groELS operons). Prevents heat-shock induction of these operons. The protein is Heat-inducible transcription repressor HrcA of Rhizobium johnstonii (strain DSM 114642 / LMG 32736 / 3841) (Rhizobium leguminosarum bv. viciae).